A 400-amino-acid chain; its full sequence is Na(+)/H(+) antiporter NhaA (400 aa).

Helical transmembrane passes span 26-46 (AGGI…NSPL), 71-91 (LIHW…GMEV), 107-127 (IFPA…YWFI), 137-157 (GWAI…ALLS), 166-186 (IFLL…IALF), 189-209 (HGLS…LILL), 225-245 (AILW…GVII), 273-293 (FVIL…GIDV), 299-319 (PLLL…IFGF), 340-360 (IFAV…LASL), and 373-393 (LSRL…YLFL).

Belongs to the NhaA Na(+)/H(+) (TC 2.A.33) antiporter family.

Its subcellular location is the cell inner membrane. The enzyme catalyses Na(+)(in) + 2 H(+)(out) = Na(+)(out) + 2 H(+)(in). Functionally, na(+)/H(+) antiporter that extrudes sodium in exchange for external protons. The chain is Na(+)/H(+) antiporter NhaA from Haemophilus influenzae (strain ATCC 51907 / DSM 11121 / KW20 / Rd).